The primary structure comprises 302 residues: Protoheme IX farnesyltransferase 1 (302 aa).

8 helical membrane-spanning segments follow: residues Val-27–Phe-47, Trp-49–Phe-69, Ser-98–Val-118, Leu-121–Leu-141, Ile-149–Gly-169, Ala-175–Ile-195, Leu-228–Phe-248, and Ile-281–Leu-301.

It belongs to the UbiA prenyltransferase family. Protoheme IX farnesyltransferase subfamily.

Its subcellular location is the cell inner membrane. It catalyses the reaction heme b + (2E,6E)-farnesyl diphosphate + H2O = Fe(II)-heme o + diphosphate. It participates in porphyrin-containing compound metabolism; heme O biosynthesis; heme O from protoheme: step 1/1. Converts heme B (protoheme IX) to heme O by substitution of the vinyl group on carbon 2 of heme B porphyrin ring with a hydroxyethyl farnesyl side group. The protein is Protoheme IX farnesyltransferase 1 of Vibrio parahaemolyticus serotype O3:K6 (strain RIMD 2210633).